The following is a 232-amino-acid chain: Lipoprotein-releasing system ATP-binding protein LolD (232 aa).

Residues 11 to 232 enclose the ABC transporter domain; it reads IEVTDLQRAF…LHDGRLIEEY (222 aa). 47–54 lines the ATP pocket; it reads GPSGAGKS.

It belongs to the ABC transporter superfamily. Lipoprotein translocase (TC 3.A.1.125) family. The complex is composed of two ATP-binding proteins (LolD) and two transmembrane proteins (LolC and LolE).

The protein localises to the cell inner membrane. Its function is as follows. Part of the ABC transporter complex LolCDE involved in the translocation of mature outer membrane-directed lipoproteins, from the inner membrane to the periplasmic chaperone, LolA. Responsible for the formation of the LolA-lipoprotein complex in an ATP-dependent manner. This is Lipoprotein-releasing system ATP-binding protein LolD from Zymomonas mobilis subsp. mobilis (strain ATCC 10988 / DSM 424 / LMG 404 / NCIMB 8938 / NRRL B-806 / ZM1).